A 500-amino-acid polypeptide reads, in one-letter code: L-arabinose isomerase (500 aa).

Mn(2+) is bound by residues Glu306, Glu333, His350, and His450.

This sequence belongs to the arabinose isomerase family. In terms of assembly, homohexamer. It depends on Mn(2+) as a cofactor.

It catalyses the reaction beta-L-arabinopyranose = L-ribulose. The protein operates within carbohydrate degradation; L-arabinose degradation via L-ribulose; D-xylulose 5-phosphate from L-arabinose (bacterial route): step 1/3. Its function is as follows. Catalyzes the conversion of L-arabinose to L-ribulose. This Salmonella choleraesuis (strain SC-B67) protein is L-arabinose isomerase.